The chain runs to 241 residues: Probable transcriptional regulatory protein PSHAb0060 (241 aa).

The protein belongs to the TACO1 family.

The protein resides in the cytoplasm. This chain is Probable transcriptional regulatory protein PSHAb0060, found in Pseudoalteromonas translucida (strain TAC 125).